The sequence spans 422 residues: Gamma-glutamyl phosphate reductase (422 aa).

Belongs to the gamma-glutamyl phosphate reductase family.

The protein resides in the cytoplasm. The enzyme catalyses L-glutamate 5-semialdehyde + phosphate + NADP(+) = L-glutamyl 5-phosphate + NADPH + H(+). It functions in the pathway amino-acid biosynthesis; L-proline biosynthesis; L-glutamate 5-semialdehyde from L-glutamate: step 2/2. Functionally, catalyzes the NADPH-dependent reduction of L-glutamate 5-phosphate into L-glutamate 5-semialdehyde and phosphate. The product spontaneously undergoes cyclization to form 1-pyrroline-5-carboxylate. This is Gamma-glutamyl phosphate reductase from Saccharophagus degradans (strain 2-40 / ATCC 43961 / DSM 17024).